Consider the following 776-residue polypeptide: Probable exo-1,4-beta-xylosidase bxlB (776 aa).

A signal peptide spans 1 to 23 (MVHLSPLLRPLAAFSFFTSLAST). 2 N-linked (GlcNAc...) asparagine glycosylation sites follow: N65 and N105. Residue D291 is part of the active site. Residues N343, N410, N421, N462, N623, and N766 are each glycosylated (N-linked (GlcNAc...) asparagine).

This sequence belongs to the glycosyl hydrolase 3 family.

The protein localises to the secreted. It carries out the reaction Hydrolysis of (1-&gt;4)-beta-D-xylans, to remove successive D-xylose residues from the non-reducing termini.. The protein operates within glycan degradation; xylan degradation. Functionally, xylan 1,4-beta-xylosidase involved in the hydrolysis of xylan, a major structural heterogeneous polysaccharide found in plant biomass representing the second most abundant polysaccharide in the biosphere, after cellulose. The chain is Probable exo-1,4-beta-xylosidase bxlB (bxlB) from Aspergillus flavus (strain ATCC 200026 / FGSC A1120 / IAM 13836 / NRRL 3357 / JCM 12722 / SRRC 167).